The following is a 272-amino-acid chain: Regulatory factor X-associated protein (272 aa).

3 disordered regions span residues 1–20 (MEAQ…GVPH), 74–142 (LCEG…KTCT), and 175–195 (KKKK…GSAG). The span at 79–94 (GDGEEEAGEDEADLLD) shows a compositional bias: acidic residues. A Nuclear localization signal motif is present at residues 163–178 (KKHRNKMYKDKYKKKK). Lys-198 participates in a covalent cross-link: Glycyl lysine isopeptide (Lys-Gly) (interchain with G-Cter in SUMO2). The tract at residues 214–270 (TGSFGDRPARPTLLEQVLNQKRLSLLRSPEVVQFLQKQQQLLNQQVLEQRQQQFPGT) is C-terminal domain.

In terms of assembly, the RFX heterotetrameric complex consists of 2 molecules of RFX5 and one each of RFXAP and RFX-B/RFXANK; with each subunit representing a separate complementation group. RFX forms cooperative DNA binding complexes with X2BP and CBF/NF-Y. RFX associates with CIITA to form an active transcriptional complex. In terms of processing, phosphorylated. As to expression, ubiquitous.

Its subcellular location is the nucleus. Functionally, part of the RFX complex that binds to the X-box of MHC II promoters. The polypeptide is Regulatory factor X-associated protein (RFXAP) (Homo sapiens (Human)).